Consider the following 379-residue polypeptide: Structure-specific endonuclease subunit EME2 (379 aa).

Residues 1–55 (MARVGPGRAGVSCQGRGRGRGGSGQRRPPTWEISDSDAEDSAGSEAAARARDPAG) form a disordered region. Positions 50–266 (ARDPAGERRA…YPLKQYRESQ (217 aa)) are nuclease-like domain; forms the post-nick DNA binding interface and is involved in DNA recognition and bending. Residues 288–379 (GLQAAWRRQI…NPDLLLDLGS (92 aa)) form a helix-hairpin-helix (2HhH); forms the pre-nick DNA binding interface and is involved in DNA recognition and bending region.

Belongs to the EME1/MMS4 family. As to quaternary structure, part of the heterodimeric MUS81-EME2 complex; the complex forms specifically during the DNA replication phase of the cell cycle.

It localises to the nucleus. In terms of biological role, non-catalytic subunit of the structure-specific, heterodimeric DNA endonuclease MUS81-EME2 which is involved in the maintenance of genome stability. In the complex, EME2 is required for DNA cleavage, participating in DNA recognition and bending. MUS81-EME2 cleaves 3'-flaps and nicked Holliday junctions, and exhibit limited endonuclease activity with 5' flaps and nicked double-stranded DNAs. MUS81-EME2 which is active during the replication of DNA is more specifically involved in replication fork processing. Replication forks frequently encounter obstacles to their passage, including DNA base lesions, DNA interstrand cross-links, difficult-to-replicate sequences, transcription bubbles, or tightly bound proteins. One mechanism for the restart of a stalled replication fork involves nucleolytic cleavage mediated by the MUS81-EME2 endonuclease. By acting upon the stalled fork, MUS81-EME2 generates a DNA double-strand break (DSB) that can be repaired by homologous recombination, leading to the restoration of an active fork. MUS81-EME2 could also function in telomere maintenance. This Homo sapiens (Human) protein is Structure-specific endonuclease subunit EME2.